We begin with the raw amino-acid sequence, 379 residues long: Cathepsin B-like cysteine proteinase 6 (379 aa).

A signal peptide spans 1 to 16 (MKTLLFLSCIVVAAYC). Residues 17 to 104 (ACNDNLESVL…LSKTKDLDLD (88 aa)) constitute a propeptide that is removed on maturation. 6 disulfide bridges follow: Cys-118–Cys-147, Cys-130–Cys-174, Cys-166–Cys-233, Cys-167–Cys-170, Cys-203–Cys-237, and Cys-211–Cys-223. The active site involves Cys-133. A glycan (N-linked (GlcNAc...) asparagine) is linked at Asn-196. An N-linked (GlcNAc...) asparagine; atypical glycan is attached at Asn-201. Catalysis depends on residues His-305 and Asn-325.

It belongs to the peptidase C1 family.

In Caenorhabditis elegans, this protein is Cathepsin B-like cysteine proteinase 6 (cpr-6).